Reading from the N-terminus, the 286-residue chain is Leukocyte cell-derived chemotaxin 1 (286 aa).

A helical transmembrane segment spans residues 29-49 (LVAFIAGAALLLFGGVGAFYL). Residues 75–157 (DSAEGTIVEV…FCADLPIYWH (83 aa)) enclose the BRICHOS domain. Cys-102 and Cys-149 are disulfide-bonded. The propeptide occupies 166 to 169 (RKRR). Over residues 166–176 (RKRRSATRMRR) the composition is skewed to basic residues. The disordered stretch occupies residues 166–220 (RKRRSATRMRRQTSAGVNRQPARRRNSTASARDERPTGPEYNPENPYHQNQGSEG). A glycan (N-linked (GlcNAc...) asparagine) is linked at Asn-191. Cystine bridges form between Cys-234–Cys-238, Cys-235–Cys-275, Cys-245–Cys-269, and Cys-249–Cys-265.

This sequence belongs to the chondromodulin-1 family. After cleavage, the post-translationally modified ChM-I is secreted as a glycoprotein.

Its subcellular location is the secreted. The protein resides in the extracellular space. It is found in the extracellular matrix. The protein localises to the endomembrane system. Functionally, bifunctional growth regulator. May contribute to the rapid growth of cartilage and vascular invasion prior to the replacement of cartilage by bone during endochondral bone development. Plays a role as antiangiogenic factor in cardiac valves to suppress neovascularization. This chain is Leukocyte cell-derived chemotaxin 1, found in Danio rerio (Zebrafish).